Consider the following 440-residue polypeptide: Streptokinase (440 aa).

The first 26 residues, 1–26 (MKNYLSFGMFALLFALTFGTVKPVQA), serve as a signal peptide directing secretion. A disordered region spans residues 72 to 94 (PAQGGKTEQGLRPKSKPLATDKG).

Its function is as follows. This protein is not a protease, but it activates plasminogen by complexing with it. As a potential virulence factor, it is thought to prevent the formation of effective fibrin barriers around the site of infection, thereby contributing to the invasiveness of the cells. This chain is Streptokinase (ska), found in Streptococcus pyogenes.